Reading from the N-terminus, the 1022-residue chain is Dihydropyrimidine dehydrogenase [NADP(+)] (1022 aa).

Residues 26–45 are disordered; the sequence is ANVHSTASKKNEKKHWKRNP. In terms of domain architecture, 4Fe-4S ferredoxin-type 1 spans 69–100; it reads ERGALREALRCLKCADAPCQKSCPTNLDIKSF. Residues C79, C82, C87, and C91 each contribute to the [4Fe-4S] cluster site. Residue V129 coordinates FAD. [4Fe-4S] cluster contacts are provided by C130, C136, C140, and Q156. Residues 194–198, 218–226, R235, and L261 each bind FAD; these read GCGPA and EKQKYIGGL. Residues 340-343, 364-365, R371, 437-439, and 481-487 each bind NADP(+); these read AGDT, RK, AFG, and DIAGFAN. 480-489 lines the FAD pocket; the sequence is GDIAGFANTT. FMN contacts are provided by residues S550 and 574–575; that span reads KT. Residues N609 and 668 to 670 contribute to the substrate site; that span reads NLS. The active-site Proton acceptor is C671. An FMN-binding site is contributed by K709. 736-737 is a binding site for substrate; that stretch reads NT. Residues G767, 793-795, and 816-817 each bind FMN; these read TGG and CS. 2 consecutive 4Fe-4S ferredoxin-type domains span residues 943–975 and 976–1006; these read VQAL…FDPE and THLP…MVSR. The [4Fe-4S] cluster site is built by C952, C955, C958, C962, C985, C988, C991, and C995.

The protein belongs to the dihydropyrimidine dehydrogenase family. As to quaternary structure, homodimer. It depends on FAD as a cofactor. The cofactor is FMN. [4Fe-4S] cluster serves as cofactor.

Its subcellular location is the cytoplasm. The catalysed reaction is 5,6-dihydrouracil + NADP(+) = uracil + NADPH + H(+). It carries out the reaction 5,6-dihydrothymine + NADP(+) = thymine + NADPH + H(+). The protein operates within amino-acid biosynthesis; beta-alanine biosynthesis. Functionally, involved in pyrimidine base degradation. Catalyzes the reduction of uracil and thymine. Also involved the degradation of the chemotherapeutic drug 5-fluorouracil. The polypeptide is Dihydropyrimidine dehydrogenase [NADP(+)] (dpyd) (Danio rerio (Zebrafish)).